Here is a 736-residue protein sequence, read N- to C-terminus: Phosphoribosylformylglycinamidine synthase subunit PurL (736 aa).

His48 is a catalytic residue. Residues Tyr51 and Lys90 each coordinate ATP. A Mg(2+)-binding site is contributed by Glu92. Substrate contacts are provided by residues Ser93–His96 and Arg115. His94 (proton acceptor) is an active-site residue. Asp116 provides a ligand contact to Mg(2+). Gln239 contacts substrate. Position 267 (Asp267) interacts with Mg(2+). Glu311–Gln313 contributes to the substrate binding site. Residues Asp492 and Gly529 each coordinate ATP. Asn530 contributes to the Mg(2+) binding site. Position 532 (Ser532) interacts with substrate.

It belongs to the FGAMS family. In terms of assembly, monomer. Part of the FGAM synthase complex composed of 1 PurL, 1 PurQ and 2 PurS subunits.

It localises to the cytoplasm. The catalysed reaction is N(2)-formyl-N(1)-(5-phospho-beta-D-ribosyl)glycinamide + L-glutamine + ATP + H2O = 2-formamido-N(1)-(5-O-phospho-beta-D-ribosyl)acetamidine + L-glutamate + ADP + phosphate + H(+). Its pathway is purine metabolism; IMP biosynthesis via de novo pathway; 5-amino-1-(5-phospho-D-ribosyl)imidazole from N(2)-formyl-N(1)-(5-phospho-D-ribosyl)glycinamide: step 1/2. In terms of biological role, part of the phosphoribosylformylglycinamidine synthase complex involved in the purines biosynthetic pathway. Catalyzes the ATP-dependent conversion of formylglycinamide ribonucleotide (FGAR) and glutamine to yield formylglycinamidine ribonucleotide (FGAM) and glutamate. The FGAM synthase complex is composed of three subunits. PurQ produces an ammonia molecule by converting glutamine to glutamate. PurL transfers the ammonia molecule to FGAR to form FGAM in an ATP-dependent manner. PurS interacts with PurQ and PurL and is thought to assist in the transfer of the ammonia molecule from PurQ to PurL. The protein is Phosphoribosylformylglycinamidine synthase subunit PurL of Bradyrhizobium sp. (strain ORS 278).